The sequence spans 96 residues: Protein transport protein Sec61 subunit beta (96 aa).

Positions 1-17 are enriched in polar residues; the sequence is MPGPTPSGTNVGSSGRS. Residues 1 to 54 form a disordered region; that stretch reads MPGPTPSGTNVGSSGRSPSKAVAARAAGSTVRQRKNASCGTRSAGRTTSAGTGG. The residue at position 2 (Pro2) is an N-acetylproline. Residues 2–70 lie on the Cytoplasmic side of the membrane; it reads PGPTPSGTNV…EDSPGLKVGP (69 aa). Residue Ser7 is modified to Phosphoserine. Thr9 is modified (phosphothreonine). Ser13, Ser14, and Ser17 each carry phosphoserine. A lipid anchor (S-palmitoyl cysteine) is attached at Cys39. The segment covering 40–50 has biased composition (low complexity); that stretch reads GTRSAGRTTSA. The chain crosses the membrane as a helical span at residues 71-91; the sequence is VPVLVMSLLFIAAVFMLHIWG.

It belongs to the SEC61-beta family. The SEC61 channel-forming translocon complex consists of channel-forming core components SEC61A1, SEC61B and SEC61G and different auxiliary components such as SEC62 and SEC63. The SEC61 channel associates with the multi-pass translocon (MPT) complex. Interacts with TRAM1.

The protein resides in the endoplasmic reticulum membrane. Functionally, component of SEC61 channel-forming translocon complex that mediates transport of signal peptide-containing precursor polypeptides across the endoplasmic reticulum (ER). Forms a ribosome receptor and a gated pore in the ER membrane, both functions required for cotranslational translocation of nascent polypeptides. The SEC61 channel is also involved in ER membrane insertion of transmembrane proteins: it mediates membrane insertion of the first few transmembrane segments of proteins, while insertion of subsequent transmembrane regions of multi-pass membrane proteins is mediated by the multi-pass translocon (MPT) complex. The SEC61 channel cooperates with the translocating protein TRAM1 to import nascent proteins into the ER. Required for PKD1/Polycystin-1 biogenesis. In Mus musculus (Mouse), this protein is Protein transport protein Sec61 subunit beta.